We begin with the raw amino-acid sequence, 959 residues long: Isoleucine--tRNA ligase (959 aa).

The 'HIGH' region motif lies at 60-70; it reads PYANGSLHMGH. Residue glutamate 569 coordinates L-isoleucyl-5'-AMP. The 'KMSKS' region motif lies at 610–614; the sequence is KMSKS. Residue lysine 613 coordinates ATP. 4 residues coordinate Zn(2+): cysteine 928, cysteine 931, cysteine 948, and cysteine 951.

Belongs to the class-I aminoacyl-tRNA synthetase family. IleS type 1 subfamily. In terms of assembly, monomer. It depends on Zn(2+) as a cofactor.

The protein localises to the cytoplasm. The enzyme catalyses tRNA(Ile) + L-isoleucine + ATP = L-isoleucyl-tRNA(Ile) + AMP + diphosphate. Its function is as follows. Catalyzes the attachment of isoleucine to tRNA(Ile). As IleRS can inadvertently accommodate and process structurally similar amino acids such as valine, to avoid such errors it has two additional distinct tRNA(Ile)-dependent editing activities. One activity is designated as 'pretransfer' editing and involves the hydrolysis of activated Val-AMP. The other activity is designated 'posttransfer' editing and involves deacylation of mischarged Val-tRNA(Ile). This is Isoleucine--tRNA ligase from Gloeothece citriformis (strain PCC 7424) (Cyanothece sp. (strain PCC 7424)).